Here is a 434-residue protein sequence, read N- to C-terminus: GTPase Obg (434 aa).

In terms of domain architecture, Obg spans 1-159 (MQFIDRCQIK…KTVRLELKYL (159 aa)). Residues 160 to 329 (ANVGIVGYPN…LVDRVFDLYQ (170 aa)) enclose the OBG-type G domain. GTP-binding positions include 166-173 (GYPNAGKS), 191-195 (FTTLV), 212-215 (DIPG), 282-285 (NKMD), and 310-312 (ISA). Residues Ser-173 and Thr-193 each coordinate Mg(2+). In terms of domain architecture, OCT spans 356 to 434 (EKTIDDDPLD…ICDYEYLIDE (79 aa)).

The protein belongs to the TRAFAC class OBG-HflX-like GTPase superfamily. OBG GTPase family. Monomer. Requires Mg(2+) as cofactor.

The protein resides in the cytoplasm. In terms of biological role, an essential GTPase which binds GTP, GDP and possibly (p)ppGpp with moderate affinity, with high nucleotide exchange rates and a fairly low GTP hydrolysis rate. Plays a role in control of the cell cycle, stress response, ribosome biogenesis and in those bacteria that undergo differentiation, in morphogenesis control. The sequence is that of GTPase Obg from Mycoplasmoides gallisepticum (strain R(low / passage 15 / clone 2)) (Mycoplasma gallisepticum).